A 222-amino-acid polypeptide reads, in one-letter code: uncharacterized protein (222 aa).

A disordered region spans residues 142-222 (ARRGGCVHPP…LPDPPSAGHL (81 aa)). Low complexity predominate over residues 160–169 (QSRSISSRRA). Over residues 182–196 (PRRRPHRHRTRPQTR) the composition is skewed to basic residues.

The protein belongs to the Rv1128c/1148c/1588c/1702c/1945/3466 family.

This is an uncharacterized protein from Mycobacterium tuberculosis (strain CDC 1551 / Oshkosh).